Reading from the N-terminus, the 855-residue chain is Envelope glycoprotein gp160 (855 aa).

The first 31 residues, 1-31, serve as a signal peptide directing secretion; the sequence is MRAREIERNCPNLWKWGIMLLGILMICSAAD. The Extracellular segment spans residues 32–683; it reads NLWVTVYYGV…ITQWLWYIKI (652 aa). Cysteines 53 and 73 form a disulfide. 15 N-linked (GlcNAc...) asparagine; by host glycosylation sites follow: Asn-87, Asn-129, Asn-140, Asn-145, Asn-154, Asn-158, Asn-186, Asn-189, Asn-199, Asn-236, Asn-243, Asn-264, Asn-278, Asn-291, and Asn-297. Cystine bridges form between Cys-118/Cys-207, Cys-125/Cys-198, Cys-130/Cys-155, Cys-220/Cys-249, and Cys-230/Cys-241. A V1 region spans residues 130–154; the sequence is CTDESDEWMGNVTGKNVTEDIRMKN. The segment at 155-198 is V2; the sequence is CSFNITTVVRDKTKQVHALFYRLDIVPIDNDNSTNSTNYRLINC. Residues 298 to 331 form a V3 region; the sequence is CTRPYKNTRQSTPIGLGQALYTTRGRTKIIGQAH. Cys-298 and Cys-332 are joined by a disulfide. Asn-333, Asn-340, and Asn-355 each carry an N-linked (GlcNAc...) asparagine; by host glycan. The CD4-binding loop stretch occupies residues 364 to 374; that stretch reads SSGGDAEITTH. 2 cysteine pairs are disulfide-bonded: Cys-378-Cys-444 and Cys-385-Cys-417. The interval 385–417 is V4; that stretch reads CNTSGLFNSTWNINNSEGANSTESDNKLITLQC. N-linked (GlcNAc...) asparagine; by host glycans are attached at residues Asn-386, Asn-392, Asn-398, Asn-404, Asn-443, Asn-447, Asn-460, Asn-461, and Asn-464. V5 regions lie at residues 459 to 470 and 462 to 470; these read TNNSSNETFRPG and SSNETFRPG. The tract at residues 511-531 is fusion peptide; it reads AIGLGAMFLGFLGAAGSTMGA. The immunosuppression stretch occupies residues 573–591; the sequence is KQLQARILAVERYLKDQQL. The cysteines at positions 597 and 603 are disulfide-linked. N-linked (GlcNAc...) asparagine; by host glycans are attached at residues Asn-610, Asn-615, Asn-624, Asn-636, and Asn-673. A coiled-coil region spans residues 632-666; sequence REIDNYTGLIYRLIEESQTQQEKNEQELLELDKWA. An MPER; binding to GalCer region spans residues 661–682; it reads ELDKWASLWNWFNITQWLWYIK. Residues 684 to 704 form a helical membrane-spanning segment; sequence FIMIVGGLIGLRIVFAVLSLV. Topologically, residues 705–855 are cytoplasmic; it reads NRVRQGYSPL…IRQGLERLLL (151 aa). Residues 711–714 carry the YXXL motif; contains endocytosis signal motif; sequence YSPL. Cys-763 carries S-palmitoyl cysteine; by host lipidation. The Di-leucine internalization motif motif lies at 854–855; that stretch reads LL.

The protein belongs to the HIV-1 env protein family. As to quaternary structure, the mature envelope protein (Env) consists of a homotrimer of non-covalently associated gp120-gp41 heterodimers. The resulting complex protrudes from the virus surface as a spike. There seems to be as few as 10 spikes on the average virion. Interacts with host CD4, CCR5 and CXCR4. Gp120 also interacts with the C-type lectins CD209/DC-SIGN and CLEC4M/DC-SIGNR (collectively referred to as DC-SIGN(R)). Gp120 and gp41 interact with GalCer. Gp120 interacts with host ITGA4/ITGB7 complex; on CD4+ T-cells, this interaction results in rapid activation of integrin ITGAL/LFA-1, which facilitates efficient cell-to-cell spreading of HIV-1. Gp120 interacts with cell-associated heparan sulfate; this interaction increases virus infectivity on permissive cells and may be involved in infection of CD4- cells. In terms of assembly, the mature envelope protein (Env) consists of a homotrimer of non-covalently associated gp120-gp41 heterodimers. The resulting complex protrudes from the virus surface as a spike. There seems to be as few as 10 spikes on the average virion. In terms of processing, highly glycosylated by host. The high number of glycan on the protein is reffered to as 'glycan shield' because it contributes to hide protein sequence from adaptive immune system. Palmitoylation of the transmembrane protein and of Env polyprotein (prior to its proteolytic cleavage) is essential for their association with host cell membrane lipid rafts. Palmitoylation is therefore required for envelope trafficking to classical lipid rafts, but not for viral replication. Post-translationally, specific enzymatic cleavages in vivo yield mature proteins. Envelope glycoproteins are synthesized as an inactive precursor that is heavily N-glycosylated and processed likely by host cell furin in the Golgi to yield the mature SU and TM proteins. The cleavage site between SU and TM requires the minimal sequence [KR]-X-[KR]-R. About 2 of the 9 disulfide bonds of gp41 are reduced by P4HB/PDI, following binding to CD4 receptor.

The protein localises to the virion membrane. It is found in the host cell membrane. It localises to the host endosome membrane. In terms of biological role, oligomerizes in the host endoplasmic reticulum into predominantly trimers. In a second time, gp160 transits in the host Golgi, where glycosylation is completed. The precursor is then proteolytically cleaved in the trans-Golgi and thereby activated by cellular furin or furin-like proteases to produce gp120 and gp41. Functionally, attaches the virus to the host lymphoid cell by binding to the primary receptor CD4. This interaction induces a structural rearrangement creating a high affinity binding site for a chemokine coreceptor like CXCR4 and/or CCR5. Acts as a ligand for CD209/DC-SIGN and CLEC4M/DC-SIGNR, which are respectively found on dendritic cells (DCs), and on endothelial cells of liver sinusoids and lymph node sinuses. These interactions allow capture of viral particles at mucosal surfaces by these cells and subsequent transmission to permissive cells. HIV subverts the migration properties of dendritic cells to gain access to CD4+ T-cells in lymph nodes. Virus transmission to permissive T-cells occurs either in trans (without DCs infection, through viral capture and transmission), or in cis (following DCs productive infection, through the usual CD4-gp120 interaction), thereby inducing a robust infection. In trans infection, bound virions remain infectious over days and it is proposed that they are not degraded, but protected in non-lysosomal acidic organelles within the DCs close to the cell membrane thus contributing to the viral infectious potential during DCs' migration from the periphery to the lymphoid tissues. On arrival at lymphoid tissues, intact virions recycle back to DCs' cell surface allowing virus transmission to CD4+ T-cells. Acts as a class I viral fusion protein. Under the current model, the protein has at least 3 conformational states: pre-fusion native state, pre-hairpin intermediate state, and post-fusion hairpin state. During fusion of viral and target intracellular membranes, the coiled coil regions (heptad repeats) assume a trimer-of-hairpins structure, positioning the fusion peptide in close proximity to the C-terminal region of the ectodomain. The formation of this structure appears to drive apposition and subsequent fusion of viral and target cell membranes. Complete fusion occurs in host cell endosomes and is dynamin-dependent, however some lipid transfer might occur at the plasma membrane. The virus undergoes clathrin-dependent internalization long before endosomal fusion, thus minimizing the surface exposure of conserved viral epitopes during fusion and reducing the efficacy of inhibitors targeting these epitopes. Membranes fusion leads to delivery of the nucleocapsid into the cytoplasm. The protein is Envelope glycoprotein gp160 of Homo sapiens (Human).